The chain runs to 316 residues: Acetaldehyde dehydrogenase (316 aa).

Residue 13–16 participates in NAD(+) binding; sequence SGNI. C131 acts as the Acyl-thioester intermediate in catalysis. NAD(+)-binding positions include 162–170 and N290; that span reads SAGPGTRAN.

It belongs to the acetaldehyde dehydrogenase family.

The enzyme catalyses acetaldehyde + NAD(+) + CoA = acetyl-CoA + NADH + H(+). Catalyzes the conversion of acetaldehyde to acetyl-CoA, using NAD(+) and coenzyme A. Is the final enzyme in the meta-cleavage pathway for the degradation of 2-aminophenol. The sequence is that of Acetaldehyde dehydrogenase (amnH) from Pseudomonas sp.